Here is a 244-residue protein sequence, read N- to C-terminus: Phosphoadenosine 5'-phosphosulfate reductase (244 aa).

Cys239 acts as the Nucleophile; cysteine thiosulfonate intermediate in catalysis.

It belongs to the PAPS reductase family. CysH subfamily.

It is found in the cytoplasm. The catalysed reaction is [thioredoxin]-disulfide + sulfite + adenosine 3',5'-bisphosphate + 2 H(+) = [thioredoxin]-dithiol + 3'-phosphoadenylyl sulfate. It participates in sulfur metabolism; hydrogen sulfide biosynthesis; sulfite from sulfate: step 3/3. Catalyzes the formation of sulfite from phosphoadenosine 5'-phosphosulfate (PAPS) using thioredoxin as an electron donor. The sequence is that of Phosphoadenosine 5'-phosphosulfate reductase from Salmonella typhi.